The chain runs to 118 residues: Non-specific lipid-transfer protein 5 (118 aa).

The first 25 residues, 1-25, serve as a signal peptide directing secretion; sequence MEGLLKLSTLVIVCMLVTAPMASEA. 4 cysteine pairs are disulfide-bonded: C29–C76, C39–C53, C54–C100, and C74–C114.

The protein belongs to the plant LTP family.

In terms of biological role, plant non-specific lipid-transfer proteins transfer phospholipids as well as galactolipids across membranes. May play a role in wax or cutin deposition in the cell walls of expanding epidermal cells and certain secretory tissues. This is Non-specific lipid-transfer protein 5 (LTP5) from Arabidopsis thaliana (Mouse-ear cress).